The following is a 106-amino-acid chain: N(2)-fixation sustaining protein CowN (106 aa).

It belongs to the CowN family.

Is required to sustain N(2)-dependent growth in the presence of low levels of carbon monoxide (CO). Probably acts by protecting the N(2) fixation ability of the nitrogenase complex, which is inactivated in the presence of CO. This chain is N(2)-fixation sustaining protein CowN, found in Denitrovibrio acetiphilus (strain DSM 12809 / NBRC 114555 / N2460).